Here is a 226-residue protein sequence, read N- to C-terminus: ATP synthase subunit a (226 aa).

The next 5 membrane-spanning stretches (helical) occupy residues 17 to 37, 78 to 98, 104 to 124, 175 to 195, and 201 to 221; these read FLFVSHMFLAALLTLIVAKLA, LVATLGLFIFFANLMEIIPGF, NINFTLALALIVFIYYNFEGI, LFVWVLLMLAPWIVPLPGFAL, and FLQTFIFMILTYVYLAGAVLL.

The protein belongs to the ATPase A chain family. As to quaternary structure, F-type ATPases have 2 components, CF(1) - the catalytic core - and CF(0) - the membrane proton channel. CF(1) has five subunits: alpha(3), beta(3), gamma(1), delta(1), epsilon(1). CF(0) has three main subunits: a(1), b(2) and c(9-12). The alpha and beta chains form an alternating ring which encloses part of the gamma chain. CF(1) is attached to CF(0) by a central stalk formed by the gamma and epsilon chains, while a peripheral stalk is formed by the delta and b chains.

It localises to the cell inner membrane. Key component of the proton channel; it plays a direct role in the translocation of protons across the membrane. This chain is ATP synthase subunit a, found in Nitratiruptor sp. (strain SB155-2).